Here is a 390-residue protein sequence, read N- to C-terminus: 23S rRNA (uracil(747)-C(5))-methyltransferase RlmC (390 aa).

4 residues coordinate [4Fe-4S] cluster: cysteine 12, cysteine 20, cysteine 23, and cysteine 100. S-adenosyl-L-methionine is bound by residues glutamine 225, phenylalanine 254, glutamate 275, and asparagine 322. The active-site Nucleophile is cysteine 349.

Belongs to the class I-like SAM-binding methyltransferase superfamily. RNA M5U methyltransferase family. RlmC subfamily.

The enzyme catalyses uridine(747) in 23S rRNA + S-adenosyl-L-methionine = 5-methyluridine(747) in 23S rRNA + S-adenosyl-L-homocysteine + H(+). In terms of biological role, catalyzes the formation of 5-methyl-uridine at position 747 (m5U747) in 23S rRNA. The chain is 23S rRNA (uracil(747)-C(5))-methyltransferase RlmC from Shewanella baltica (strain OS185).